Consider the following 267-residue polypeptide: tRNA pseudouridine synthase A (267 aa).

The active-site Nucleophile is the D51. Y109 lines the substrate pocket.

Belongs to the tRNA pseudouridine synthase TruA family. Homodimer.

The enzyme catalyses uridine(38/39/40) in tRNA = pseudouridine(38/39/40) in tRNA. Functionally, formation of pseudouridine at positions 38, 39 and 40 in the anticodon stem and loop of transfer RNAs. This Staphylococcus aureus (strain USA300) protein is tRNA pseudouridine synthase A.